A 294-amino-acid polypeptide reads, in one-letter code: Protoheme IX farnesyltransferase (294 aa).

9 consecutive transmembrane segments (helical) span residues 25-45, 48-68, 92-112, 115-135, 141-161, 170-190, 216-236, 240-260, and 272-292; these read SLVLVTAAGGMWLAPGHMGAV, LVTLLATAGTVGAANALNCYW, AVALWFGISLAAVSLPALALG, VLTAALGLVALLSYVLAYTPL, AAMLVGGVPGALPPLMGWTAV, FSLFAIMFLWQMPHFIAIALF, VVLYLVALIPMTLLPFQLHIA, YLAAAVLLGLSFLGLGAWGFF, and FFFSLIYLTGLFAALALDRVP.

Belongs to the UbiA prenyltransferase family. Protoheme IX farnesyltransferase subfamily.

The protein resides in the cell inner membrane. The enzyme catalyses heme b + (2E,6E)-farnesyl diphosphate + H2O = Fe(II)-heme o + diphosphate. It participates in porphyrin-containing compound metabolism; heme O biosynthesis; heme O from protoheme: step 1/1. Converts heme B (protoheme IX) to heme O by substitution of the vinyl group on carbon 2 of heme B porphyrin ring with a hydroxyethyl farnesyl side group. This is Protoheme IX farnesyltransferase from Myxococcus xanthus (strain DK1622).